Reading from the N-terminus, the 40-residue chain is Photosystem II reaction center protein J (40 aa).

A helical membrane pass occupies residues 8–28 (IPLWIIGTVAGIVVIGLIGLF).

Belongs to the PsbJ family. In terms of assembly, PSII is composed of 1 copy each of membrane proteins PsbA, PsbB, PsbC, PsbD, PsbE, PsbF, PsbH, PsbI, PsbJ, PsbK, PsbL, PsbM, PsbT, PsbX, PsbY, PsbZ, Psb30/Ycf12, at least 3 peripheral proteins of the oxygen-evolving complex and a large number of cofactors. It forms dimeric complexes.

It localises to the plastid. It is found in the chloroplast thylakoid membrane. Its function is as follows. One of the components of the core complex of photosystem II (PSII). PSII is a light-driven water:plastoquinone oxidoreductase that uses light energy to abstract electrons from H(2)O, generating O(2) and a proton gradient subsequently used for ATP formation. It consists of a core antenna complex that captures photons, and an electron transfer chain that converts photonic excitation into a charge separation. In Pisum sativum (Garden pea), this protein is Photosystem II reaction center protein J.